The primary structure comprises 101 residues: Small ribosomal subunit protein uS10 (101 aa).

It belongs to the universal ribosomal protein uS10 family. Part of the 30S ribosomal subunit.

Involved in the binding of tRNA to the ribosomes. The chain is Small ribosomal subunit protein uS10 from Brachyspira pilosicoli (Serpulina pilosicoli).